Here is a 345-residue protein sequence, read N- to C-terminus: Arginase (345 aa).

The segment covering 1–16 (MKETAAAKFERQHMDS) has biased composition (basic and acidic residues). Positions 1-34 (MKETAAAKFERQHMDSPDLGTDDDDKMSPATSPF) are disordered. Positions 101, 124, 126, 128, 232, and 234 each coordinate Mn(2+).

This sequence belongs to the arginase family. Homotrimer. The cofactor is Mn(2+).

The catalysed reaction is L-arginine + H2O = urea + L-ornithine. The protein operates within nitrogen metabolism; urea cycle; L-ornithine and urea from L-arginine: step 1/1. With respect to regulation, the enzyme activity is increased in the range of 20-50% upon the addition of Mn(2+) (1 mM), Co(2+) (1 mM), Ni(2+) (1 and 5 mM) and K(+) (5 mM). In contrast, the addition of Cu(2+), Zn(2+), Ca(2+), Mg(2+), Fe(2+) (both 1 and 5 mM), and Co(2+) (5 mM) strongly suppresses the arginase activity. SDS (1%) and EDTA (1 mM) are the most potent inhibitors. Reducing agents DTT (1 mM), PMSF (1 mM) and beta-mercaptoethanol (1 mM) also significantly inhibit activity by 85%, 64% and 35%, respectively. Surfactants Triton X-100 (1%), Tween-80 (1%) and Tween-20 (1%) are more tolerant, showing a slight decrease of arginase activity in the range of 10-30%. Functionally, cold-active L-arginase that catalyzes the hydrolysis of L-arginine to L-ornithine and urea, an essential reaction in the urea cycle for toxic ammonia removal and cell proliferation. Is not able to use D-arginine or L-canavanine as substrates. The protein is Arginase of Glaciozyma antarctica (strain PI12) (Antarctic psychrophilic yeast).